We begin with the raw amino-acid sequence, 529 residues long: Laccase-1 (529 aa).

The N-terminal stretch at 1-23 is a signal peptide; the sequence is MFPGARILATLTLALHLLHGTHA. 3 Plastocyanin-like domains span residues 25-159, 170-312, and 380-499; these read IGPT…FIVY, DVDN…ILRY, and TAPV…FAED. Residue N57 is glycosylated (N-linked (GlcNAc...) asparagine). Positions 96, 98, 141, and 143 each coordinate Cu cation. 2 disulfides stabilise this stretch: C117-C514 and C149-C236. Residues N239 and N282 are each glycosylated (N-linked (GlcNAc...) asparagine). Cu cation-binding residues include H425, H428, H430, H481, C482, H483, and H487.

This sequence belongs to the multicopper oxidase family. Requires Cu cation as cofactor.

Its subcellular location is the secreted. It carries out the reaction 4 hydroquinone + O2 = 4 benzosemiquinone + 2 H2O. In terms of biological role, lignin degradation and detoxification of lignin-derived products. The sequence is that of Laccase-1 (POX1) from Pleurotus ostreatus (Oyster mushroom).